The primary structure comprises 454 residues: Bifunctional protein GlmU (454 aa).

Positions 1–228 are pyrophosphorylase; sequence MNKCAIILAA…FEETLGVNSR (228 aa). UDP-N-acetyl-alpha-D-glucosamine-binding positions include 8-11, Lys22, Gln73, and 78-79; these read LAAG and GT. Asp103 lines the Mg(2+) pocket. Residues Gly140, Glu154, Asn169, and Asn226 each contribute to the UDP-N-acetyl-alpha-D-glucosamine site. Asn226 provides a ligand contact to Mg(2+). Residues 229–249 form a linker region; the sequence is AELAKVESIMRNRINRTHLDN. The tract at residues 250–454 is N-acetyltransferase; it reads GVTIIDPLNT…EGWVERKKLK (205 aa). Residues Arg331 and Lys349 each contribute to the UDP-N-acetyl-alpha-D-glucosamine site. The active-site Proton acceptor is the His361. UDP-N-acetyl-alpha-D-glucosamine-binding residues include Tyr364 and Asn375. Acetyl-CoA is bound by residues 384-385, Ala421, and Arg438; that span reads NY.

It in the N-terminal section; belongs to the N-acetylglucosamine-1-phosphate uridyltransferase family. In the C-terminal section; belongs to the transferase hexapeptide repeat family. In terms of assembly, homotrimer. It depends on Mg(2+) as a cofactor.

The protein localises to the cytoplasm. It catalyses the reaction alpha-D-glucosamine 1-phosphate + acetyl-CoA = N-acetyl-alpha-D-glucosamine 1-phosphate + CoA + H(+). The enzyme catalyses N-acetyl-alpha-D-glucosamine 1-phosphate + UTP + H(+) = UDP-N-acetyl-alpha-D-glucosamine + diphosphate. Its pathway is nucleotide-sugar biosynthesis; UDP-N-acetyl-alpha-D-glucosamine biosynthesis; N-acetyl-alpha-D-glucosamine 1-phosphate from alpha-D-glucosamine 6-phosphate (route II): step 2/2. It participates in nucleotide-sugar biosynthesis; UDP-N-acetyl-alpha-D-glucosamine biosynthesis; UDP-N-acetyl-alpha-D-glucosamine from N-acetyl-alpha-D-glucosamine 1-phosphate: step 1/1. The protein operates within bacterial outer membrane biogenesis; LPS lipid A biosynthesis. Functionally, catalyzes the last two sequential reactions in the de novo biosynthetic pathway for UDP-N-acetylglucosamine (UDP-GlcNAc). The C-terminal domain catalyzes the transfer of acetyl group from acetyl coenzyme A to glucosamine-1-phosphate (GlcN-1-P) to produce N-acetylglucosamine-1-phosphate (GlcNAc-1-P), which is converted into UDP-GlcNAc by the transfer of uridine 5-monophosphate (from uridine 5-triphosphate), a reaction catalyzed by the N-terminal domain. The chain is Bifunctional protein GlmU from Clostridium perfringens (strain ATCC 13124 / DSM 756 / JCM 1290 / NCIMB 6125 / NCTC 8237 / Type A).